The sequence spans 365 residues: ATP-dependent (S)-NAD(P)H-hydrate dehydratase (365 aa).

A chloroplast-targeting transit peptide spans 1 to 43 (MLVKPSIISGLVRLTSHSPSSSSSVLRRQEFLVRTLCGSPIIR). Leu-2 carries the post-translational modification N-acetylserine. A YjeF C-terminal domain is found at 53–361 (AESVLRTVTP…ECLGESLEDI (309 aa)). (6S)-NADPHX contacts are provided by residues Gly-169 and 222 to 228 (NVNEYKR). ATP-binding positions include 262–266 (KGKSD) and 281–290 (GSPRRCGGQG). Asp-291 contributes to the (6S)-NADPHX binding site.

The protein belongs to the NnrD/CARKD family. The cofactor is Mg(2+).

The protein localises to the plastid. It is found in the chloroplast. The protein resides in the cytoplasm. The catalysed reaction is (6S)-NADHX + ATP = ADP + phosphate + NADH + H(+). It catalyses the reaction (6S)-NADPHX + ATP = ADP + phosphate + NADPH + H(+). Its function is as follows. Catalyzes the dehydration of the S-form of NAD(P)HX at the expense of ATP, which is converted to ADP. Together with NAD(P)HX epimerase, which catalyzes the epimerization of the S- and R-forms, the enzyme allows the repair of both epimers of NAD(P)HX, a damaged form of NAD(P)H that is a result of enzymatic or heat-dependent hydration. This chain is ATP-dependent (S)-NAD(P)H-hydrate dehydratase, found in Arabidopsis thaliana (Mouse-ear cress).